Consider the following 560-residue polypeptide: Arginine--tRNA ligase (560 aa).

A 'HIGH' region motif is present at residues 122-132 (ANPNGPLHIGH).

It belongs to the class-I aminoacyl-tRNA synthetase family.

It is found in the cytoplasm. The catalysed reaction is tRNA(Arg) + L-arginine + ATP = L-arginyl-tRNA(Arg) + AMP + diphosphate. The chain is Arginine--tRNA ligase (argS) from Methanothermobacter thermautotrophicus (strain ATCC 29096 / DSM 1053 / JCM 10044 / NBRC 100330 / Delta H) (Methanobacterium thermoautotrophicum).